Consider the following 402-residue polypeptide: Beta sliding clamp (402 aa).

It belongs to the beta sliding clamp family. Forms a ring-shaped head-to-tail homodimer around DNA which binds and tethers DNA polymerases and other proteins to the DNA. The DNA replisome complex has a single clamp-loading complex (3 tau and 1 each of delta, delta', psi and chi subunits) which binds 3 Pol III cores (1 core on the leading strand and 2 on the lagging strand) each with a beta sliding clamp dimer. Additional proteins in the replisome are other copies of gamma, psi and chi, Ssb, DNA helicase and RNA primase.

It localises to the cytoplasm. In terms of biological role, confers DNA tethering and processivity to DNA polymerases and other proteins. Acts as a clamp, forming a ring around DNA (a reaction catalyzed by the clamp-loading complex) which diffuses in an ATP-independent manner freely and bidirectionally along dsDNA. Initially characterized for its ability to contact the catalytic subunit of DNA polymerase III (Pol III), a complex, multichain enzyme responsible for most of the replicative synthesis in bacteria; Pol III exhibits 3'-5' exonuclease proofreading activity. The beta chain is required for initiation of replication as well as for processivity of DNA replication. The sequence is that of Beta sliding clamp (dnaN) from Mycobacterium tuberculosis (strain CDC 1551 / Oshkosh).